Reading from the N-terminus, the 133-residue chain is Large-conductance mechanosensitive channel (133 aa).

Helical transmembrane passes span 10–30 and 76–96; these read FAMR…GAFG and GAFI…FLMI.

Belongs to the MscL family. Homopentamer.

It localises to the cell inner membrane. Functionally, channel that opens in response to stretch forces in the membrane lipid bilayer. May participate in the regulation of osmotic pressure changes within the cell. In Pasteurella multocida (strain Pm70), this protein is Large-conductance mechanosensitive channel.